The sequence spans 37 residues: Defensin-A (37 aa).

3 disulfide bridges follow: Cys-4–Cys-25, Cys-10–Cys-33, and Cys-14–Cys-35.

It localises to the secreted. In terms of biological role, has antibacterial activity against M.luteus and E.coli. The chain is Defensin-A from Mytilus edulis (Blue mussel).